The chain runs to 493 residues: Gamma-aminobutyric acid receptor subunit alpha-3 (493 aa).

Positions 1–28 (MITTQMWHFYVTRVGLLLLISILPGTTG) are cleaved as a signal peptide. The disordered stretch occupies residues 27–54 (TGQGESRRQEPGDFVKQDIGGLSPKHAP). At 29 to 276 (QGESRRQEPG…THFHLKRKIG (248 aa)) the chain is on the extracellular side. Basic and acidic residues predominate over residues 31 to 42 (ESRRQEPGDFVK). N-linked (GlcNAc...) asparagine glycosylation occurs at Asn-63. Position 119 (Arg-119) interacts with 4-aminobutanoate. N-linked (GlcNAc...) asparagine glycans are attached at residues Asn-163 and Asn-176. Thr-182 serves as a coordination point for 4-aminobutanoate. A disulfide bridge connects residues Cys-191 and Cys-205. An N-linked (GlcNAc...) asparagine glycan is attached at Asn-228. The next 3 helical transmembrane spans lie at 277 to 298 (YFVI…VSFW), 304 to 325 (VPAR…SISA), and 338 to 359 (MDWF…FATV). At 360-458 (NYFTKRSWAW…TYNSVSKVDK (99 aa)) the chain is on the cytoplasmic side. Ser-427 carries the phosphoserine modification. Position 428 is a phosphothreonine (Thr-428). A phosphoserine mark is found at Ser-434 and Ser-443. The chain crosses the membrane as a helical span at residues 459-480 (ISRIIFPVLFAIFNLVYWATYV).

Belongs to the ligand-gated ion channel (TC 1.A.9) family. Gamma-aminobutyric acid receptor (TC 1.A.9.5) subfamily. GABRA3 sub-subfamily. In terms of assembly, heteropentamer, formed by a combination of alpha (GABRA1-6), beta (GABRB1-3), gamma (GABRG1-3), delta (GABRD), epsilon (GABRE), rho (GABRR1-3), pi (GABRP) and theta (GABRQ) chains, each subunit exhibiting distinct physiological and pharmacological properties. Binds UBQLN1. Interacts with GPHN. As to expression, expressed in most brain regions. Expressed in lungs, in alveolar epithelium.

The protein localises to the postsynaptic cell membrane. It localises to the cell membrane. It carries out the reaction chloride(in) = chloride(out). Alpha subunit of the heteropentameric ligand-gated chloride channel gated by gamma-aminobutyric acid (GABA), a major inhibitory neurotransmitter in the brain. GABA-gated chloride channels, also named GABA(A) receptors (GABAAR), consist of five subunits arranged around a central pore and contain GABA active binding site(s) located at the alpha and beta subunit interface(s). When activated by GABA, GABAARs selectively allow the flow of chloride anions across the cell membrane down their electrochemical gradient. Chloride influx into the postsynaptic neuron following GABAAR opening decreases the neuron ability to generate a new action potential, thereby reducing nerve transmission. The sequence is that of Gamma-aminobutyric acid receptor subunit alpha-3 from Rattus norvegicus (Rat).